Reading from the N-terminus, the 61-residue chain is Small ribosomal subunit protein uS14 (61 aa).

Zn(2+) is bound by residues cysteine 24, cysteine 27, cysteine 40, and cysteine 43.

It belongs to the universal ribosomal protein uS14 family. Zinc-binding uS14 subfamily. Part of the 30S ribosomal subunit. Contacts proteins S3 and S10. Requires Zn(2+) as cofactor.

Binds 16S rRNA, required for the assembly of 30S particles and may also be responsible for determining the conformation of the 16S rRNA at the A site. This chain is Small ribosomal subunit protein uS14, found in Borrelia duttonii (strain Ly).